A 30-amino-acid chain; its full sequence is Cyclotide hyen-G (30 aa).

The segment at residues 1-30 (GLPCGESCVYIPCISTVLGCSCSNKVCYRD) is a cross-link (cyclopeptide (Gly-Asp)). Intrachain disulfides connect cysteine 4-cysteine 20, cysteine 8-cysteine 22, and cysteine 13-cysteine 27.

In terms of processing, this is a cyclic peptide. As to expression, detected in stems (at protein level).

In terms of biological role, probably participates in a plant defense mechanism. This is Cyclotide hyen-G from Pigea enneasperma (Spade flower).